We begin with the raw amino-acid sequence, 104 residues long: Large ribosomal subunit protein cL38 (104 aa).

The N-terminal 39 residues, 1-39 (MASVSSIFGCGVSMAPNSSLRNKAIRTERRSACGGLLIE), are a transit peptide targeting the chloroplast. The tract at residues 42–76 (SRPQKKSTAHHMKTRPRKSRLSDRNRKPTVYAPLP) is disordered. The segment covering 44-60 (PQKKSTAHHMKTRPRKS) has biased composition (basic residues).

Belongs to the chloroplast-specific ribosomal protein cL38 family. Part of the 50S ribosomal subunit.

The protein resides in the plastid. It is found in the chloroplast. The sequence is that of Large ribosomal subunit protein cL38 (PSRP6) from Pisum sativum (Garden pea).